Consider the following 484-residue polypeptide: MAKTLAEKVWDAHVVRKGDGEGANAQPDLLYIDLHLVHEVTSPQAFEGLRLAGRPLRRPDLTIATEDHNTPTLDIDKPIADLTSRTQIQTLRNNCKEFGVRLHSLGDAEQGIVHVVGPQLGLTQPGMTVVCGDSHTSTHGAFGALAMGIGTSEVEHVMATQTLSLKPFKTMAINVEGTLRPGVSAKDIILAVIAKIGTGGGQGYVLEYRGSAIRALSMEARMTICNMSIEAGARAGLVAPDQTTYDYMYGRPHAPQGAEWDAAVEYWNTLRTDDDATFDVEVDLDADTLEPFVTWGTNPGQGVSLSSRVPSPEDFGDENAKAAAERALQYMGLEAGTPMKEIRVDTVFLGSCTNSRMEDLRAAADIIRGRTKDPNIRMLVVPGSARVRLEAEAEGLDKVFKDFGAEWRFAGCSMCLGMNPDQLEVGERCASTSNRNFEGRQGKGGRTHLVSPVVAAATAVRGTLSSPSDLDPAPESAAVSSSAA.

Positions 352, 412, and 415 each coordinate [4Fe-4S] cluster. The segment at 462–484 (GTLSSPSDLDPAPESAAVSSSAA) is disordered.

It belongs to the aconitase/IPM isomerase family. LeuC type 1 subfamily. Heterodimer of LeuC and LeuD. [4Fe-4S] cluster is required as a cofactor.

It carries out the reaction (2R,3S)-3-isopropylmalate = (2S)-2-isopropylmalate. It functions in the pathway amino-acid biosynthesis; L-leucine biosynthesis; L-leucine from 3-methyl-2-oxobutanoate: step 2/4. In terms of biological role, catalyzes the isomerization between 2-isopropylmalate and 3-isopropylmalate, via the formation of 2-isopropylmaleate. The sequence is that of 3-isopropylmalate dehydratase large subunit from Arthrobacter sp. (strain FB24).